The sequence spans 405 residues: Aspartokinase (405 aa).

ACT domains follow at residues 267–344 (VSME…AKVS) and 345–405 (IVGV…QLDQ).

The protein belongs to the aspartokinase family.

It carries out the reaction L-aspartate + ATP = 4-phospho-L-aspartate + ADP. It participates in amino-acid biosynthesis; L-lysine biosynthesis via DAP pathway; (S)-tetrahydrodipicolinate from L-aspartate: step 1/4. It functions in the pathway amino-acid biosynthesis; L-methionine biosynthesis via de novo pathway; L-homoserine from L-aspartate: step 1/3. Its pathway is amino-acid biosynthesis; L-threonine biosynthesis; L-threonine from L-aspartate: step 1/5. In Helicobacter pylori (strain ATCC 700392 / 26695) (Campylobacter pylori), this protein is Aspartokinase (lysC).